The chain runs to 247 residues: tRNA (guanine-N(7)-)-methyltransferase (247 aa).

S-adenosyl-L-methionine is bound by residues Gly-70, Glu-93–Ile-94, Asn-128–Ala-129, and Leu-148. Asp-151 is a catalytic residue. Ser-226 to Glu-228 contributes to the S-adenosyl-L-methionine binding site.

It belongs to the class I-like SAM-binding methyltransferase superfamily. TrmB family.

The protein resides in the nucleus. The catalysed reaction is guanosine(46) in tRNA + S-adenosyl-L-methionine = N(7)-methylguanosine(46) in tRNA + S-adenosyl-L-homocysteine. The protein operates within tRNA modification; N(7)-methylguanine-tRNA biosynthesis. Catalyzes the formation of N(7)-methylguanine at position 46 (m7G46) in tRNA. The chain is tRNA (guanine-N(7)-)-methyltransferase from Drosophila persimilis (Fruit fly).